A 220-amino-acid chain; its full sequence is UPF0319 protein Asuc_1002 (220 aa).

The N-terminal stretch at 1–21 (MKFRLAAVAAAALLASSASFA) is a signal peptide.

Belongs to the UPF0319 family.

The polypeptide is UPF0319 protein Asuc_1002 (Actinobacillus succinogenes (strain ATCC 55618 / DSM 22257 / CCUG 43843 / 130Z)).